We begin with the raw amino-acid sequence, 1060 residues long: Carbamoyl phosphate synthase large chain (1060 aa).

The segment at 1 to 401 is carboxyphosphate synthetic domain; that stretch reads MPKRQDIHKI…SLLKAVRSLE (401 aa). 12 residues coordinate ATP: Arg-129, Arg-169, Gly-175, Gly-176, Arg-208, Ile-210, Glu-215, Gly-241, Val-242, His-243, Gln-284, and Glu-298. Residues 133 to 327 form the ATP-grasp 1 domain; the sequence is KNLMQKLHEP…IAKMAAKIAV (195 aa). Mg(2+) contacts are provided by Gln-284, Glu-298, and Asn-300. Positions 284, 298, and 300 each coordinate Mn(2+). The oligomerization domain stretch occupies residues 402–546; that stretch reads VGLIHPERPA…YSTYESSTES (145 aa). Residues 547–929 are carbamoyl phosphate synthetic domain; sequence VKSDKPSVLV…ALYKAFEAAG (383 aa). Residues 671–861 enclose the ATP-grasp 2 domain; that stretch reads DQVIKSLKLP…LAQVATLAIL (191 aa). The ATP site is built by Arg-707, His-746, Leu-748, Glu-752, Gly-777, Ile-778, His-779, Ser-780, Gln-820, and Glu-832. 3 residues coordinate Mg(2+): Gln-820, Glu-832, and Asn-834. Positions 820, 832, and 834 each coordinate Mn(2+). The MGS-like domain maps to 930–1060; the sequence is MHLPQFGRAL…QAFSISPIKS (131 aa). Positions 930–1060 are allosteric domain; that stretch reads MHLPQFGRAL…QAFSISPIKS (131 aa).

Belongs to the CarB family. Composed of two chains; the small (or glutamine) chain promotes the hydrolysis of glutamine to ammonia, which is used by the large (or ammonia) chain to synthesize carbamoyl phosphate. Tetramer of heterodimers (alpha,beta)4. It depends on Mg(2+) as a cofactor. The cofactor is Mn(2+).

It carries out the reaction hydrogencarbonate + L-glutamine + 2 ATP + H2O = carbamoyl phosphate + L-glutamate + 2 ADP + phosphate + 2 H(+). The catalysed reaction is hydrogencarbonate + NH4(+) + 2 ATP = carbamoyl phosphate + 2 ADP + phosphate + 2 H(+). It participates in amino-acid biosynthesis; L-arginine biosynthesis; carbamoyl phosphate from bicarbonate: step 1/1. The protein operates within pyrimidine metabolism; UMP biosynthesis via de novo pathway; (S)-dihydroorotate from bicarbonate: step 1/3. Large subunit of the glutamine-dependent carbamoyl phosphate synthetase (CPSase). CPSase catalyzes the formation of carbamoyl phosphate from the ammonia moiety of glutamine, carbonate, and phosphate donated by ATP, constituting the first step of 2 biosynthetic pathways, one leading to arginine and/or urea and the other to pyrimidine nucleotides. The large subunit (synthetase) binds the substrates ammonia (free or transferred from glutamine from the small subunit), hydrogencarbonate and ATP and carries out an ATP-coupled ligase reaction, activating hydrogencarbonate by forming carboxy phosphate which reacts with ammonia to form carbamoyl phosphate. The chain is Carbamoyl phosphate synthase large chain from Lacticaseibacillus paracasei (strain ATCC 334 / BCRC 17002 / CCUG 31169 / CIP 107868 / KCTC 3260 / NRRL B-441) (Lactobacillus paracasei).